A 152-amino-acid chain; its full sequence is Ribosome maturation factor RimP (152 aa).

It belongs to the RimP family.

The protein resides in the cytoplasm. In terms of biological role, required for maturation of 30S ribosomal subunits. The sequence is that of Ribosome maturation factor RimP from Aeromonas hydrophila subsp. hydrophila (strain ATCC 7966 / DSM 30187 / BCRC 13018 / CCUG 14551 / JCM 1027 / KCTC 2358 / NCIMB 9240 / NCTC 8049).